Reading from the N-terminus, the 208-residue chain is Thioesterase 1/protease 1/lysophospholipase L1 (208 aa).

Residues 1-26 form the signal peptide; it reads MMNFNNVFRWHLPFLFLVLLTFRAAA. Ser36 functions as the Nucleophile in the catalytic mechanism. Gly70 and Asn99 together coordinate substrate. Catalysis depends on residues Asp180 and His183.

It belongs to the 'GDSL' lipolytic enzyme family. As to quaternary structure, monomer or homotetramer.

The protein localises to the periplasm. It catalyses the reaction a fatty acyl-CoA + H2O = a fatty acid + CoA + H(+). The enzyme catalyses hexadecanoyl-CoA + H2O = hexadecanoate + CoA + H(+). The catalysed reaction is (9Z)-hexadecenoyl-CoA + H2O = (9Z)-hexadecenoate + CoA + H(+). It carries out the reaction octadecanoyl-CoA + H2O = octadecanoate + CoA + H(+). It catalyses the reaction (9Z)-octadecenoyl-CoA + H2O = (9Z)-octadecenoate + CoA + H(+). The enzyme catalyses (9Z)-octadecenoyl-[ACP] + H2O = (9Z)-octadecenoate + holo-[ACP] + H(+). The catalysed reaction is (11Z)-octadecenoyl-CoA + H2O = (11Z)-octadecenoate + CoA + H(+). It carries out the reaction tetradecanoyl-CoA + H2O = tetradecanoate + CoA + H(+). It catalyses the reaction (5Z,8Z,11Z,14Z)-eicosatetraenoyl-CoA + H2O = (5Z,8Z,11Z,14Z)-eicosatetraenoate + CoA + H(+). The enzyme catalyses dodecanoyl-CoA + H2O = dodecanoate + CoA + H(+). The catalysed reaction is decanoyl-CoA + H2O = decanoate + CoA + H(+). It carries out the reaction hexanoyl-CoA + H2O = hexanoate + CoA + H(+). It catalyses the reaction a 1-acyl-sn-glycero-3-phosphocholine + H2O = sn-glycerol 3-phosphocholine + a fatty acid + H(+). The enzyme catalyses a phenyl acetate + H2O = a phenol + acetate + H(+). The catalysed reaction is a butanoate ester + H2O = an aliphatic alcohol + butanoate + H(+). It carries out the reaction a hexanoate ester + H2O = an aliphatic alcohol + hexanoate + H(+). It catalyses the reaction an octanoate ester + H2O = an aliphatic alcohol + octanoate + H(+). Its function is as follows. TesA is a multifunctional esterase that can act as a thioesterase, arylesterase, lysophospholipase and protease. The protein is Thioesterase 1/protease 1/lysophospholipase L1 (tesA) of Escherichia coli O6:H1 (strain CFT073 / ATCC 700928 / UPEC).